A 596-amino-acid polypeptide reads, in one-letter code: Thioredoxin reductase 1, mitochondrial (596 aa).

The disordered stretch occupies residues 59–87 (LTGQRGSRDSTGATGGNAPAGSGAGAPPP). The segment covering 68–79 (STGATGGNAPAG) has biased composition (low complexity). FAD-binding positions include 120-126 (IGGGSAG), 143-147 (LDFVK), 159-170 (GGTCVNVGCIPK), 233-235 (GLG), 262-266 (AVGGR), Ser-282, Phe-286, and Tyr-302. Cysteines 162 and 167 form a disulfide. NADP(+) contacts are provided by residues 322–328 (VRSIVLR) and Pro-355. FAD-binding positions include 392 to 399 (RKGLVDDL), 429 to 432 (VGDI), 438 to 443 (ELTPVA), and Phe-472. The active-site Proton acceptor is the His-569. Residue Pro-570 participates in FAD binding. A disulfide bridge links Cys-594 with Cys-595.

Belongs to the class-I pyridine nucleotide-disulfide oxidoreductase family. As to quaternary structure, homodimer. FAD is required as a cofactor. As to expression, during embryogenesis, expression is seen in germ cell progenitors, developing midgut, hindgut and proventriculus.

It is found in the mitochondrion. Its subcellular location is the cytoplasm. It carries out the reaction [thioredoxin]-dithiol + NADP(+) = [thioredoxin]-disulfide + NADPH + H(+). Functionally, thioredoxin system is a major player in glutathione metabolism, due to the demonstrated absence of a glutathione reductase. Functionally interacts with the Sod/Cat reactive oxidation species (ROS) defense system and thereby has a role in preadult development and life span. Lack of a glutathione reductase suggests antioxidant defense in Drosophila, and probably in related insects, differs fundamentally from that in other organisms. In Drosophila melanogaster (Fruit fly), this protein is Thioredoxin reductase 1, mitochondrial.